Reading from the N-terminus, the 430-residue chain is Serine--tRNA ligase (430 aa).

237–239 serves as a coordination point for L-serine; sequence TAE. Residue 268–270 coordinates ATP; the sequence is RSE. Glutamate 291 is an L-serine binding site. ATP is bound at residue 355 to 358; that stretch reads EISS. Serine 391 provides a ligand contact to L-serine.

It belongs to the class-II aminoacyl-tRNA synthetase family. Type-1 seryl-tRNA synthetase subfamily. In terms of assembly, homodimer. The tRNA molecule binds across the dimer.

Its subcellular location is the cytoplasm. It carries out the reaction tRNA(Ser) + L-serine + ATP = L-seryl-tRNA(Ser) + AMP + diphosphate + H(+). The catalysed reaction is tRNA(Sec) + L-serine + ATP = L-seryl-tRNA(Sec) + AMP + diphosphate + H(+). It functions in the pathway aminoacyl-tRNA biosynthesis; selenocysteinyl-tRNA(Sec) biosynthesis; L-seryl-tRNA(Sec) from L-serine and tRNA(Sec): step 1/1. In terms of biological role, catalyzes the attachment of serine to tRNA(Ser). Is also able to aminoacylate tRNA(Sec) with serine, to form the misacylated tRNA L-seryl-tRNA(Sec), which will be further converted into selenocysteinyl-tRNA(Sec). The polypeptide is Serine--tRNA ligase (Escherichia fergusonii (strain ATCC 35469 / DSM 13698 / CCUG 18766 / IAM 14443 / JCM 21226 / LMG 7866 / NBRC 102419 / NCTC 12128 / CDC 0568-73)).